A 98-amino-acid polypeptide reads, in one-letter code: Pancreatic polypeptide prohormone (98 aa).

An N-terminal signal peptide occupies residues 1–29; it reads MAVAYYCLSLFLLSTWVALLLQPLQGAWG. At Tyr-65 the chain carries Tyrosine amide.

Belongs to the NPY family. In terms of processing, no icosapeptide-like peptide is cleaved from the C-terminal.

Its subcellular location is the secreted. Its function is as follows. Hormone secreted by pancreatic cells that acts as a regulator of pancreatic and gastrointestinal functions probably by signaling through the G protein-coupled receptor NPY4R2. The sequence is that of Pancreatic polypeptide prohormone (Ppy) from Rattus norvegicus (Rat).